The chain runs to 548 residues: T-complex protein 1 subunit theta (548 aa).

Alanine 2 is modified (N-acetylalanine). Serine 23 carries the post-translational modification Phosphoserine. Tyrosine 30 is subject to Phosphotyrosine. Tyrosine 47 and glycine 48 together coordinate ADP. Aspartate 99 contributes to the Mg(2+) binding site. The ADP site is built by glycine 100, threonine 101, asparagine 102, and phenylalanine 103. The ATP site is built by glycine 100, threonine 101, and asparagine 102. Serine 162 is modified (phosphoserine). Methionine 169, serine 170, and lysine 171 together coordinate ADP. 2 residues coordinate ATP: serine 170 and lysine 171. Serine 213 carries the post-translational modification Phosphoserine. Residues lysine 224, lysine 254, and lysine 260 each participate in a glycyl lysine isopeptide (Lys-Gly) (interchain with G-Cter in SUMO2) cross-link. Residues serine 269 and serine 317 each carry the phosphoserine modification. Residues lysine 318 and lysine 400 each carry the N6-acetyllysine modification. Glycine 412 contacts ADP. Glycine 412 provides a ligand contact to ATP. Lysine 459 participates in a covalent cross-link: Glycyl lysine isopeptide (Lys-Gly) (interchain with G-Cter in SUMO1). Lysine 466 carries the post-translational modification N6-acetyllysine. An ADP-binding site is contributed by aspartate 499. Positions 499 and 504 each coordinate ATP. Tyrosine 505 bears the Phosphotyrosine mark. The disordered stretch occupies residues 529–548 (PAGGPKPPSGKKDWDDDQND). Lysine 534 participates in a covalent cross-link: Glycyl lysine isopeptide (Lys-Gly) (interchain with G-Cter in SUMO2). Phosphoserine is present on serine 537. Lysine 539 participates in a covalent cross-link: Glycyl lysine isopeptide (Lys-Gly) (interchain with G-Cter in SUMO2).

Belongs to the TCP-1 chaperonin family. In terms of assembly, component of the chaperonin-containing T-complex (TRiC), a hexadecamer composed of two identical back-to-back stacked rings enclosing a protein folding chamber. Each ring is made up of eight different subunits: TCP1/CCT1, CCT2, CCT3, CCT4, CCT5, CCT6A/CCT6, CCT7, CCT8. Interacts with PACRG. Interacts with DNAAF4. Interacts with synaptic plasticity regulator PANTS.

The protein localises to the cytoplasm. The protein resides in the cytoskeleton. Its subcellular location is the microtubule organizing center. It localises to the centrosome. It is found in the cilium basal body. The catalysed reaction is ATP + H2O = ADP + phosphate + H(+). Its function is as follows. Component of the chaperonin-containing T-complex (TRiC), a molecular chaperone complex that assists the folding of actin, tubulin and other proteins upon ATP hydrolysis. The TRiC complex mediates the folding of WRAP53/TCAB1, thereby regulating telomere maintenance. As part of the TRiC complex may play a role in the assembly of BBSome, a complex involved in ciliogenesis regulating transports vesicles to the cilia. In Homo sapiens (Human), this protein is T-complex protein 1 subunit theta (CCT8).